A 231-amino-acid chain; its full sequence is MKLPAPLIEGRLVRRYKRFLADVELADGSLVTAHTPNTGSMLQCAVPGHRVLISRSDNPKRKLAYTLELIEVAGFWVDTHTHRTNRVAEEALRGGAVLEFTGWQVTPEHTYGDSRIDFLLQQNDRQALVEVKNVTLLCDGQCACFPDAVTTRGQKHLRTLMDARRAGMRAAILFVVQRGEATAFRPADTIDPEYGRLLRQAVSEGVEALAYRTRISPTQTFIDRRLPVWLD.

It belongs to the SfsA family.

The chain is Sugar fermentation stimulation protein homolog from Syntrophotalea carbinolica (strain DSM 2380 / NBRC 103641 / GraBd1) (Pelobacter carbinolicus).